The sequence spans 265 residues: WUSCHEL-related homeobox 3B (265 aa).

The homeobox; WUS-type DNA-binding region spans 4–68 (TPSTRWCPTP…NHKARERQRL (65 aa)). Disordered stretches follow at residues 77–107 (QQQYAQQQQQATAAAPASSPNSSATLLAPPA) and 242–265 (PTKSTGLKDECSSSKSSSCSTSTN). Positions 254-265 (SSKSSSCSTSTN) are enriched in low complexity.

The protein belongs to the WUS homeobox family. In terms of tissue distribution, predominantly expressed in tissues enriched for shoot meristems and young lateral organ primordia. First expressed in lateral domains of shoot meristems. It is then expressed in the margins of young lateral organ primordia. Not expressed in roots, seedling leaves or fully expanded coleoptiles. Also expressed in vegetative shoot apices (five leaf primordia and the SAM) and in the male inflorescence. Expressed at high level in the female inflorescence.

It is found in the nucleus. Its function is as follows. Probable transcription factor required to initiate organ founder cells in a lateral domain of shoot meristems. Involved in leaf formation. The chain is WUSCHEL-related homeobox 3B (WOX3B) from Zea mays (Maize).